A 616-amino-acid polypeptide reads, in one-letter code: RNA-directed RNA polymerase (616 aa).

It catalyses the reaction RNA(n) + a ribonucleoside 5'-triphosphate = RNA(n+1) + diphosphate. RNA-dependent RNA polymerase which replicates the viral genome. This is RNA-directed RNA polymerase from White clover cryptic virus 1 (isolate Boccardo/2004) (WCCV-1).